We begin with the raw amino-acid sequence, 539 residues long: MLRTTASRKIVLRRGLASINTGTTVASKKASHKFRNTFWTIALSATAFYAGGIIYSQKNDKFGDFFSNNVPFAEDLLETYEHYHDRPTLFLEDSWDGLKAKSNDLLSGLTGSSQTRRSNRENIEVKKILSLEPLNIETENSDPQLKEIIGSLNDLINSLNDSNLSIPESEFNSIKKSNQNMLTNLSQLNETLKEALSNYMIQRTSEVITELNTQYENSKREFEKNLQKNLLQEVDEFKENLTKQKDKELEEKLKANEELLQAKHANEVGLLSITQVKEFNKIIKDKIEKERNGRLAHLEEINSEVNDLSKSIDRSSKILSKNEALVQLTFQVDEIKSRINNNNLPDVNIDKELSRLKLLSNLLSTFNKKSCCDDGDCCSCKKGNKNEGKEGKISCKCKPKTNPPSLLSVALDELESTCSGKKILSNEQIYNRWNLLADDFKTASLLPPNSGILGQLTAKVFSLFLFTKTGNPSNATDFDSVYARVGDNLRVSNLNDAVEEVVSLKGWPHKVCESWIEDARRKLEVQRLVEILDCEIRTL.

The transit peptide at methionine 1–leucine 16 directs the protein to the mitochondrion. Residues alanine 17–asparagine 36 lie on the Mitochondrial matrix side of the membrane. The helical transmembrane segment at threonine 37–serine 56 threads the bilayer. At glutamine 57 to leucine 539 the chain is on the mitochondrial intermembrane side. Residues asparagine 172 to glutamate 267 are a coiled coil.

The protein belongs to the MICOS complex subunit Mic60 family. In terms of assembly, component of the mitochondrial contact site and cristae organizing system (MICOS) complex.

It is found in the mitochondrion inner membrane. Functionally, component of the MICOS complex, a large protein complex of the mitochondrial inner membrane that plays crucial roles in the maintenance of crista junctions, inner membrane architecture, and formation of contact sites to the outer membrane. Plays a role in keeping cristae membranes connected to the inner boundary membrane. Also promotes protein import via the mitochondrial intermembrane space assembly (MIA) pathway. The chain is MICOS complex subunit MIC60 (MIC60) from Saccharomyces cerevisiae (strain YJM789) (Baker's yeast).